A 69-amino-acid chain; its full sequence is Microcin H47 immunity protein MchI (69 aa).

Residues 1-6 are Cytoplasmic-facing; it reads MSYKKL. A helical transmembrane segment spans residues 7-29; that stretch reads YQLTAIFSLPLTILLVSLSSLRI. Topologically, residues 30-38 are periplasmic; that stretch reads VGEGNSYVD. Residues 39-61 traverse the membrane as a helical segment; that stretch reads VFLSFIIFLGFIELIHGIRKILV. Over 62–69 the chain is Cytoplasmic; it reads WSGWKNGS.

Its subcellular location is the cell membrane. In terms of biological role, protects a microcin H47-producer cell against microcin H47. In Escherichia coli, this protein is Microcin H47 immunity protein MchI (mchI).